Here is a 115-residue protein sequence, read N- to C-terminus: NAD(P)H-quinone oxidoreductase subunit M (115 aa).

The protein belongs to the complex I NdhM subunit family. NDH-1 can be composed of about 15 different subunits; different subcomplexes with different compositions have been identified which probably have different functions.

It is found in the cellular thylakoid membrane. The catalysed reaction is a plastoquinone + NADH + (n+1) H(+)(in) = a plastoquinol + NAD(+) + n H(+)(out). The enzyme catalyses a plastoquinone + NADPH + (n+1) H(+)(in) = a plastoquinol + NADP(+) + n H(+)(out). Functionally, NDH-1 shuttles electrons from an unknown electron donor, via FMN and iron-sulfur (Fe-S) centers, to quinones in the respiratory and/or the photosynthetic chain. The immediate electron acceptor for the enzyme in this species is believed to be plastoquinone. Couples the redox reaction to proton translocation, and thus conserves the redox energy in a proton gradient. Cyanobacterial NDH-1 also plays a role in inorganic carbon-concentration. This is NAD(P)H-quinone oxidoreductase subunit M from Prochlorococcus marinus (strain MIT 9312).